A 514-amino-acid polypeptide reads, in one-letter code: Glutamyl-tRNA(Gln) amidotransferase subunit B, mitochondrial (514 aa).

This sequence belongs to the GatB/GatE family. GatB subfamily. As to quaternary structure, subunit of the heterotrimeric GatCAB amidotransferase (AdT) complex, composed of A, B and C subunits.

The protein localises to the mitochondrion. The catalysed reaction is L-glutamyl-tRNA(Gln) + L-glutamine + ATP + H2O = L-glutaminyl-tRNA(Gln) + L-glutamate + ADP + phosphate + H(+). Functionally, allows the formation of correctly charged Gln-tRNA(Gln) through the transamidation of misacylated Glu-tRNA(Gln) in the mitochondria. The reaction takes place in the presence of glutamine and ATP through an activated gamma-phospho-Glu-tRNA(Gln). This Naegleria gruberi (Amoeba) protein is Glutamyl-tRNA(Gln) amidotransferase subunit B, mitochondrial.